The primary structure comprises 141 residues: Hemoglobin subunit alpha (141 aa).

One can recognise a Globin domain in the interval 1–141 (VLSANDKSNV…VSTVLTSKYR (141 aa)). Residue S3 is modified to Phosphoserine. Residues K7 and K11 each carry the N6-succinyllysine modification. The residue at position 16 (K16) is an N6-acetyllysine; alternate. An N6-succinyllysine; alternate modification is found at K16. The residue at position 24 (Y24) is a Phosphotyrosine. Position 35 is a phosphoserine (S35). The residue at position 40 (K40) is an N6-succinyllysine. The residue at position 49 (S49) is a Phosphoserine. An O2-binding site is contributed by H58. A heme b-binding site is contributed by H87. At S102 the chain carries Phosphoserine. T108 carries the post-translational modification Phosphothreonine. Position 124 is a phosphoserine (S124). 2 positions are modified to phosphothreonine: T134 and T137. At S138 the chain carries Phosphoserine.

Belongs to the globin family. In terms of assembly, heterotetramer of two alpha chains and two beta chains. As to expression, red blood cells.

Its function is as follows. Involved in oxygen transport from the lung to the various peripheral tissues. Hemopressin acts as an antagonist peptide of the cannabinoid receptor CNR1. Hemopressin-binding efficiently blocks cannabinoid receptor CNR1 and subsequent signaling. The sequence is that of Hemoglobin subunit alpha (HBA) from Hippopotamus amphibius (Hippopotamus).